A 491-amino-acid polypeptide reads, in one-letter code: Nicotinamide phosphoribosyltransferase (491 aa).

N-acetylmethionine is present on methionine 1. Tyrosine 188 carries the phosphotyrosine modification. Arginine 196 contacts diphosphate. Aspartate 219 is a beta-nicotinamide D-ribonucleotide binding site. The diphosphate site is built by histidine 247 and arginine 311. Beta-nicotinamide D-ribonucleotide contacts are provided by residues 311–313 (RPD), 353–354 (GD), glycine 384, and arginine 392. Serine 472 carries the phosphoserine modification.

Belongs to the NAPRTase family. In terms of assembly, homodimer. As to expression, ubiquitously expressed in lymphoid and non-lymphoid tissues.

It is found in the nucleus. The protein localises to the cytoplasm. Its subcellular location is the secreted. It carries out the reaction beta-nicotinamide D-ribonucleotide + diphosphate = 5-phospho-alpha-D-ribose 1-diphosphate + nicotinamide + H(+). It functions in the pathway cofactor biosynthesis; NAD(+) biosynthesis; nicotinamide D-ribonucleotide from 5-phospho-alpha-D-ribose 1-diphosphate and nicotinamide: step 1/1. The secreted form behaves both as a cytokine with immunomodulating properties and an adipokine with anti-diabetic properties, it has no enzymatic activity, partly because of lack of activation by ATP, which has a low level in extracellular space and plasma. Catalyzes the condensation of nicotinamide with 5-phosphoribosyl-1-pyrophosphate to yield nicotinamide mononucleotide, an intermediate in the biosynthesis of NAD. It is the rate limiting component in the mammalian NAD biosynthesis pathway. Plays a role in the modulation of circadian clock function. NAMPT-dependent oscillatory production of NAD regulates oscillation of clock target gene expression by releasing the core clock component: CLOCK-BMAL1 heterodimer from NAD-dependent SIRT1-mediated suppression. This chain is Nicotinamide phosphoribosyltransferase (Nampt), found in Mus musculus (Mouse).